Consider the following 192-residue polypeptide: ER protein translocation subcomplex subunit sec67 (192 aa).

As to quaternary structure, component of the heterotetrameric Sec62/63complex composed of sec62, sec63, sec66 and sec72. The Sec62/63 complex associates with the Sec61 complex to form the Sec complex.

It localises to the cytoplasm. The protein resides in the nucleus. In terms of biological role, acts as a non-essential component of the Sec62/63 complex which is involved in SRP-independent post-translational translocation across the endoplasmic reticulum (ER) and functions together with the Sec61 complex and bip1 in a channel-forming translocon complex. A cycle of assembly and disassembly of Sec62/63 complex from sec61 may govern the activity of the translocon. sec72 may be involved in signal peptide recognition for a defined subset of leader peptides, or may increase the efficiency of unusual or 'difficult' secretory precursors to the translocation pore, it may be that this protein binds charged leader peptides to the membrane until they engage the translocation apparatus. The protein is ER protein translocation subcomplex subunit sec67 (sec67) of Schizosaccharomyces pombe (strain 972 / ATCC 24843) (Fission yeast).